Here is a 99-residue protein sequence, read N- to C-terminus: UPF0213 protein SP_1535 (99 aa).

The region spanning 3–78 is the GIY-YIG domain; it reads HKAYMYVLEC…KRKKRPQKEE (76 aa).

This sequence belongs to the UPF0213 family.

This chain is UPF0213 protein SP_1535, found in Streptococcus pneumoniae serotype 4 (strain ATCC BAA-334 / TIGR4).